A 60-amino-acid chain; its full sequence is Large ribosomal subunit protein bL32 (60 aa).

Belongs to the bacterial ribosomal protein bL32 family.

This chain is Large ribosomal subunit protein bL32, found in Hydrogenobaculum sp. (strain Y04AAS1).